Consider the following 201-residue polypeptide: dCTP deaminase, dUMP-forming (201 aa).

DCTP contacts are provided by residues 117–122, aspartate 135, 143–145, glutamine 163, tyrosine 177, and glutamine 188; these read RSSFGR and TLE. Glutamate 145 serves as the catalytic Proton donor/acceptor.

It belongs to the dCTP deaminase family. In terms of assembly, homotrimer.

The catalysed reaction is dCTP + 2 H2O = dUMP + NH4(+) + diphosphate. The protein operates within pyrimidine metabolism; dUMP biosynthesis; dUMP from dCTP: step 1/1. Its function is as follows. Bifunctional enzyme that catalyzes both the deamination of dCTP to dUTP and the hydrolysis of dUTP to dUMP without releasing the toxic dUTP intermediate. This is dCTP deaminase, dUMP-forming from Methanococcus aeolicus (strain ATCC BAA-1280 / DSM 17508 / OCM 812 / Nankai-3).